The sequence spans 509 residues: Lysine--tRNA ligase (509 aa).

2 residues coordinate Mg(2+): glutamate 417 and glutamate 424.

It belongs to the class-II aminoacyl-tRNA synthetase family. As to quaternary structure, homodimer. Mg(2+) serves as cofactor.

It is found in the cytoplasm. The enzyme catalyses tRNA(Lys) + L-lysine + ATP = L-lysyl-tRNA(Lys) + AMP + diphosphate. The polypeptide is Lysine--tRNA ligase (Blochmanniella pennsylvanica (strain BPEN)).